Reading from the N-terminus, the 90-residue chain is Large ribosomal subunit protein eL37 (90 aa).

The A20-type zinc-finger motif lies at 13 to 46 (NKSHTLCNRCGRRSFHVQKKTCSSCGYPAAKMRS). Positions 19, 22, 34, and 37 each coordinate Zn(2+).

The protein belongs to the eukaryotic ribosomal protein eL37 family. Component of the large ribosomal subunit. Mature ribosomes consist of a small (40S) and a large (60S) subunit. The 40S subunit contains about 32 different proteins and 1 molecule of RNA (18S). The 60S subunit contains 45 different proteins and 3 molecules of RNA (25S, 5.8S and 5S). It depends on Zn(2+) as a cofactor.

It localises to the cytoplasm. In terms of biological role, component of the ribosome, a large ribonucleoprotein complex responsible for the synthesis of proteins in the cell. The small ribosomal subunit (SSU) binds messenger RNAs (mRNAs) and translates the encoded message by selecting cognate aminoacyl-transfer RNA (tRNA) molecules. The large subunit (LSU) contains the ribosomal catalytic site termed the peptidyl transferase center (PTC), which catalyzes the formation of peptide bonds, thereby polymerizing the amino acids delivered by tRNAs into a polypeptide chain. The nascent polypeptides leave the ribosome through a tunnel in the LSU and interact with protein factors that function in enzymatic processing, targeting, and the membrane insertion of nascent chains at the exit of the ribosomal tunnel. In Candida albicans (strain SC5314 / ATCC MYA-2876) (Yeast), this protein is Large ribosomal subunit protein eL37.